The sequence spans 90 residues: Cell division topological specificity factor (90 aa).

This sequence belongs to the MinE family.

Its function is as follows. Prevents the cell division inhibition by proteins MinC and MinD at internal division sites while permitting inhibition at polar sites. This ensures cell division at the proper site by restricting the formation of a division septum at the midpoint of the long axis of the cell. This chain is Cell division topological specificity factor, found in Lachnoclostridium phytofermentans (strain ATCC 700394 / DSM 18823 / ISDg) (Clostridium phytofermentans).